Here is a 725-residue protein sequence, read N- to C-terminus: Catalase-peroxidase (725 aa).

The segment at residues 98-226 is a cross-link (tryptophyl-tyrosyl-methioninium (Trp-Tyr) (with M-252)); it reads WHMAGSYRTS…LAAVQMGLIY (129 aa). His-99 (proton acceptor) is an active-site residue. A cross-link (tryptophyl-tyrosyl-methioninium (Tyr-Met) (with W-98)) is located at residues 226 to 252; that stretch reads YVNPEGVNGKSDPQATAYQMRETFARM. His-267 provides a ligand contact to heme b.

It belongs to the peroxidase family. Peroxidase/catalase subfamily. In terms of assembly, homodimer or homotetramer. Heme b is required as a cofactor. Formation of the three residue Trp-Tyr-Met cross-link is important for the catalase, but not the peroxidase activity of the enzyme.

The enzyme catalyses H2O2 + AH2 = A + 2 H2O. It catalyses the reaction 2 H2O2 = O2 + 2 H2O. Functionally, bifunctional enzyme with both catalase and broad-spectrum peroxidase activity. The sequence is that of Catalase-peroxidase from Paracoccus denitrificans (strain Pd 1222).